A 248-amino-acid chain; its full sequence is 14-3-3 protein sigma (248 aa).

Phosphoserine is present on residues serine 5, serine 74, and serine 248.

The protein belongs to the 14-3-3 family. As to quaternary structure, homodimer. Interacts with KRT17 and SAMSN1. Found in a complex with XPO7, EIF4A1, ARHGAP1, VPS26A, VPS29 and VPS35. Interacts with GAB2. Interacts with SRPK2. Interacts with COPS6. Interacts with COP1; this interaction leads to proteasomal degradation. Interacts with the 'Thr-369' phosphorylated form of DAPK2. Interacts with PI4KB. Interacts with SLITRK1. Interacts with LRRK2; this interaction is dependent on LRRK2 phosphorylation. Interacts with PKP3 (via N-terminus); the interaction maintains the cytoplasmic pool of PKP3, facilitates PKP3 exchange at desmosomes and restricts PKP3 localization to existing desmosome cell junctions. Interacts with LCP2. Ubiquitinated. Ubiquitination by RFFL induces proteasomal degradation and indirectly regulates p53/TP53 activation. As to expression, present mainly in tissues enriched in stratified squamous keratinizing epithelium.

The protein localises to the cytoplasm. It is found in the nucleus. The protein resides in the secreted. Adapter protein implicated in the regulation of a large spectrum of both general and specialized signaling pathways. Binds to a large number of partners, usually by recognition of a phosphoserine or phosphothreonine motif. Binding generally results in the modulation of the activity of the binding partner. Promotes cytosolic retention of GBP1 GTPase by binding to phosphorylated GBP1, thereby inhibiting the innate immune response. Also acts as a TP53/p53-regulated inhibitor of G2/M progression. When bound to KRT17, regulates protein synthesis and epithelial cell growth by stimulating Akt/mTOR pathway. Acts to maintain desmosome cell junction adhesion in epithelial cells via interacting with and sequestering PKP3 to the cytoplasm, thereby restricting its translocation to existing desmosome structures and therefore maintaining desmosome protein homeostasis. Also acts to facilitate PKP3 exchange at desmosome plaques, thereby maintaining keratinocyte intercellular adhesion. May also regulate MDM2 autoubiquitination and degradation and thereby activate p53/TP53. This Homo sapiens (Human) protein is 14-3-3 protein sigma (SFN).